Here is a 431-residue protein sequence, read N- to C-terminus: Serine hydroxymethyltransferase 2 (431 aa).

(6S)-5,6,7,8-tetrahydrofolate-binding positions include Leu-131 and 135–137; that span reads GHL. Lys-240 is modified (N6-(pyridoxal phosphate)lysine). Glu-256 provides a ligand contact to (6S)-5,6,7,8-tetrahydrofolate.

The protein belongs to the SHMT family. Homodimer. Requires pyridoxal 5'-phosphate as cofactor.

It localises to the cytoplasm. It carries out the reaction (6R)-5,10-methylene-5,6,7,8-tetrahydrofolate + glycine + H2O = (6S)-5,6,7,8-tetrahydrofolate + L-serine. Its pathway is one-carbon metabolism; tetrahydrofolate interconversion. It functions in the pathway amino-acid biosynthesis; glycine biosynthesis; glycine from L-serine: step 1/1. Functionally, catalyzes the reversible interconversion of serine and glycine with tetrahydrofolate (THF) serving as the one-carbon carrier. This reaction serves as the major source of one-carbon groups required for the biosynthesis of purines, thymidylate, methionine, and other important biomolecules. Also exhibits THF-independent aldolase activity toward beta-hydroxyamino acids, producing glycine and aldehydes, via a retro-aldol mechanism. The sequence is that of Serine hydroxymethyltransferase 2 from Vibrio vulnificus (strain CMCP6).